The primary structure comprises 334 residues: Protein-methionine-sulfoxide reductase catalytic subunit MsrP (334 aa).

A signal peptide (tat-type signal) is located at residues 1-44 (MKKIRPLTEADVTAESAFFMQRRQVLKALGISAAALSLPSTAQA). Mo-molybdopterin contacts are provided by residues N88, 91 to 92 (YE), C146, T181, N233, R238, and 249 to 251 (GIK).

It belongs to the MsrP family. As to quaternary structure, heterodimer of a catalytic subunit (MsrP) and a heme-binding subunit (MsrQ). Requires Mo-molybdopterin as cofactor. In terms of processing, predicted to be exported by the Tat system. The position of the signal peptide cleavage has not been experimentally proven.

The protein localises to the periplasm. The catalysed reaction is L-methionyl-[protein] + a quinone + H2O = L-methionyl-(S)-S-oxide-[protein] + a quinol. It carries out the reaction L-methionyl-[protein] + a quinone + H2O = L-methionyl-(R)-S-oxide-[protein] + a quinol. Part of the MsrPQ system that repairs oxidized periplasmic proteins containing methionine sulfoxide residues (Met-O), using respiratory chain electrons. Thus protects these proteins from oxidative-stress damage caused by reactive species of oxygen and chlorine generated by the host defense mechanisms. MsrPQ is essential for the maintenance of envelope integrity under bleach stress, rescuing a wide series of structurally unrelated periplasmic proteins from methionine oxidation, including the primary periplasmic chaperone SurA and the lipoprotein Pal. The catalytic subunit MsrP is non-stereospecific, being able to reduce both (R-) and (S-) diastereoisomers of methionine sulfoxide. In Salmonella agona (strain SL483), this protein is Protein-methionine-sulfoxide reductase catalytic subunit MsrP.